Consider the following 44-residue polypeptide: MFDISSILIRGGGVLIVVILLLWIVEHNEDFIDAKSMNYNNQTV.

Residues 4–24 (ISSILIRGGGVLIVVILLLWI) traverse the membrane as a helical segment.

It is found in the membrane. This is an uncharacterized protein from Ornithodoros (relapsing fever ticks).